A 240-amino-acid polypeptide reads, in one-letter code: MLEFKHKNTFFLFNFKQPKAQQACFFRSSFWKKQARILGSAQGRGVTWFLQTKDLFGVNAALKHYYRGGLWGKINRDYYRFSTLSNARSFAEFSLLKQLHEAGLAVPKPLGACVEKVAFGFYRADLLTEKIEHAQDLTVYLQQGKLTEQDWHKVGQLIHQLHSLQVCHTDLNAHNILVQQRDDGRKFWLIDFDKCAHQLGERWKSENLNRLHRSFMKEVTRMKIQFSEQDWQALLAGYQA.

Residue Asp-170 is part of the active site.

Belongs to the protein kinase superfamily. KdkA/RfaP family.

The protein resides in the cell inner membrane. It catalyses the reaction an alpha-Kdo-(2-&gt;6)-lipid IVA + ATP = a 4-O-phospho-alpha-Kdo-(2-&gt;6)-lipid IVA + ADP + H(+). The protein operates within bacterial outer membrane biogenesis; LPS core biosynthesis. Catalyzes the ATP-dependent phosphorylation of the 3-deoxy-D-manno-octulosonic acid (Kdo) residue in Kdo-lipid IV(A) at the 4-OH position. The chain is 3-deoxy-D-manno-octulosonic acid kinase (kdkA) from Pasteurella multocida (strain Pm70).